Consider the following 220-residue polypeptide: 5-hmdU DNA kinase 1 (220 aa).

The protein belongs to the thymidylate kinase family. 5-hmdU DNA kinase subfamily.

The enzyme catalyses 5-hydroxymethyl-dUMP in DNA + ATP = 5-phosphomethyl-dUMP in DNA + ADP + H(+). Functionally, phosphorylates 5-hydroxymethyluracil (5hmdU) into 5-phosphomethyl-2'-deoxyuridine (5- PmdU) on DNA as a step in the pathway leading to thymidine hypermodifications in the viral genome. The phosphate is added internally to the DNA polymer. As a final result of the pathway of hypermodification, 5-aminoethoxy-2'-deoxymethyluridine (5-NeOmdU) substitutes for about 40% of the thymidines in the viral DNA. These modifications probably prevent degradation of viral genome by the host restriction-modification antiviral defense system. The protein is 5-hmdU DNA kinase 1 of Salmonella phage ViI.